The primary structure comprises 147 residues: Large ribosomal subunit protein uL13 (147 aa).

The protein belongs to the universal ribosomal protein uL13 family. Part of the 50S ribosomal subunit.

Its function is as follows. This protein is one of the early assembly proteins of the 50S ribosomal subunit, although it is not seen to bind rRNA by itself. It is important during the early stages of 50S assembly. In Corynebacterium glutamicum (strain R), this protein is Large ribosomal subunit protein uL13.